The chain runs to 125 residues: Large ribosomal subunit protein bL12 (125 aa).

It belongs to the bacterial ribosomal protein bL12 family. Homodimer. Part of the ribosomal stalk of the 50S ribosomal subunit. Forms a multimeric L10(L12)X complex, where L10 forms an elongated spine to which 2 to 4 L12 dimers bind in a sequential fashion. Binds GTP-bound translation factors.

Its function is as follows. Forms part of the ribosomal stalk which helps the ribosome interact with GTP-bound translation factors. Is thus essential for accurate translation. This chain is Large ribosomal subunit protein bL12, found in Heliobacterium modesticaldum (strain ATCC 51547 / Ice1).